Here is a 208-residue protein sequence, read N- to C-terminus: MVKAKKLVFKWSLLVFSFFTLSLFLVSCTENVREIKSSSVINELFPNFWVFITHLLAFFILLTLMIFLFWKPTQRFLNNRKNLLEAQIKQANELEKQARNLLEESNQRHEKALIVSKEIVDQANYEALQLKSEIEKTANRQANLMIFQARQEIEKERRSLKEQSIKESVELAMLAAQELILKKIDQKSDREFIDKFIRDLEANETEDD.

The signal sequence occupies residues 1–27 (MVKAKKLVFKWSLLVFSFFTLSLFLVS). C28 carries the N-palmitoyl cysteine lipid modification. Residue C28 is the site of S-diacylglycerol cysteine attachment. Residues 49-69 (WVFITHLLAFFILLTLMIFLF) traverse the membrane as a helical segment.

It belongs to the ATPase B chain family. F-type ATPases have 2 components, F(1) - the catalytic core - and F(0) - the membrane proton channel. F(1) has five subunits: alpha(3), beta(3), gamma(1), delta(1), epsilon(1). F(0) has three main subunits: a(1), b(2) and c(10-14). The alpha and beta chains form an alternating ring which encloses part of the gamma chain. F(1) is attached to F(0) by a central stalk formed by the gamma and epsilon chains, while a peripheral stalk is formed by the delta and b chains.

The protein localises to the cell membrane. In terms of biological role, f(1)F(0) ATP synthase produces ATP from ADP in the presence of a proton or sodium gradient. F-type ATPases consist of two structural domains, F(1) containing the extramembraneous catalytic core and F(0) containing the membrane proton channel, linked together by a central stalk and a peripheral stalk. During catalysis, ATP synthesis in the catalytic domain of F(1) is coupled via a rotary mechanism of the central stalk subunits to proton translocation. Component of the F(0) channel, it forms part of the peripheral stalk, linking F(1) to F(0). This chain is ATP synthase subunit b, found in Mycoplasma genitalium (strain ATCC 33530 / DSM 19775 / NCTC 10195 / G37) (Mycoplasmoides genitalium).